The sequence spans 457 residues: Probable xyloglucan 6-xylosyltransferase 5 (457 aa).

Residues 1-40 are disordered; sequence MGQDGSPAHKRPSGSGGGLPTTTLTNGGGRGGRGGLLPRG. Residues 1–51 lie on the Cytoplasmic side of the membrane; that stretch reads MGQDGSPAHKRPSGSGGGLPTTTLTNGGGRGGRGGLLPRGRQMQKTFNNIK. Gly residues predominate over residues 26–37; it reads NGGGRGGRGGLL. The chain crosses the membrane as a helical; Signal-anchor for type II membrane protein span at residues 52–72; that stretch reads ITILCGFVTILVLRGTIGVGN. The Lumenal segment spans residues 73 to 457; that stretch reads LGSSSADAVN…RTPVETKPQN (385 aa). Positions 97–116 are disordered; that stretch reads RSDSDPTDLDEPQEGDMNPN. Residues 101–110 are compositionally biased toward acidic residues; sequence DPTDLDEPQE. N-linked (GlcNAc...) asparagine glycosylation is found at Asn-116 and Asn-432.

The protein belongs to the glycosyltransferase 34 family. As to quaternary structure, interacts with XXT2 and CSLC4. Interacts with FUT1 and XLT2. In terms of tissue distribution, highly expressed in roots, stems and cauline leaves, and at lower levels in rosette leaves, flowers and siliques.

The protein resides in the golgi apparatus membrane. The enzyme catalyses Transfers an alpha-D-xylosyl residue from UDP-D-xylose to a glucose residue in xyloglucan, forming an alpha-(1-&gt;6)-D-xylosyl-D-glucose linkage.. Its function is as follows. Probable xyloglucan xylosyltransferase involved in the biosynthesis of xyloglucan in roots. May act in association with XXT1 and XXT2. Associates with other xyloglucan-synthesizing enzymes to form multiprotein complexes for xyloglucan synthesis in the Golgi. This Arabidopsis thaliana (Mouse-ear cress) protein is Probable xyloglucan 6-xylosyltransferase 5.